A 1035-amino-acid polypeptide reads, in one-letter code: Ephrin type-A receptor 6 (1035 aa).

The signal sequence occupies residues Met1–Ala22. Residues Trp23–Val549 lie on the Extracellular side of the membrane. Residues Gln33–Arg211 form the Eph LBD domain. Fibronectin type-III domains follow at residues Pro330–Asp440 and Ala441–Glu536. 3 N-linked (GlcNAc...) asparagine glycosylation sites follow: Asn342, Asn396, and Asn409. A helical membrane pass occupies residues Ile550–Ile570. Topologically, residues Thr571–Val1035 are cytoplasmic. Tyr605 and Tyr611 each carry phosphotyrosine; by autocatalysis. One can recognise a Protein kinase domain in the interval Ile630–Val943. ATP is bound by residues Ile636–Val644 and Lys662. Catalysis depends on Asp797, which acts as the Proton acceptor. Phosphotyrosine; by autocatalysis is present on residues Tyr830 and Tyr977. The SAM domain maps to Pro960–His1024. Residues Phe1033 to Val1035 carry the PDZ-binding motif.

It belongs to the protein kinase superfamily. Tyr protein kinase family. Ephrin receptor subfamily. In terms of assembly, heterotetramer upon binding of the ligand. The heterotetramer is composed of an ephrin dimer and a receptor dimer. Oligomerization is probably required to induce biological responses. Interacts (via SAM domain) with ANKS1A (via SAM domain).

The protein localises to the membrane. It catalyses the reaction L-tyrosyl-[protein] + ATP = O-phospho-L-tyrosyl-[protein] + ADP + H(+). Receptor tyrosine kinase which binds promiscuously GPI-anchored ephrin-A family ligands residing on adjacent cells, leading to contact-dependent bidirectional signaling into neighboring cells. The signaling pathway downstream of the receptor is referred to as forward signaling while the signaling pathway downstream of the ephrin ligand is referred to as reverse signaling. This Mus musculus (Mouse) protein is Ephrin type-A receptor 6 (Epha6).